Here is a 279-residue protein sequence, read N- to C-terminus: uncharacterized protein (279 aa).

This sequence to M.tuberculosis Rv2569c.

This is an uncharacterized protein from Mycobacterium leprae (strain TN).